The chain runs to 875 residues: Acetyl-coenzyme A carboxylase carboxyl transferase subunit alpha, chloroplastic (875 aa).

The transit peptide at 1-50 (MASSSATLVGSTASDLLRSSTTGFTGVPLRTLGRAGLVLKRRDLTVSVTA) directs the protein to the chloroplast. Positions 128-380 (EAKYQKALVE…KIAINEAMDE (253 aa)) constitute a CoA carboxyltransferase C-terminal domain. Residues 664–705 (LLLDKNKAATRKQELKKKSDEHKEAARLEQELKKKFDEVMDT) adopt a coiled-coil conformation. The tract at residues 845–875 (KEKYENLTRPAGDTLTDDKLREKVGVNRNFS) is disordered. The segment covering 860 to 869 (TDDKLREKVG) has biased composition (basic and acidic residues).

The protein belongs to the AccA family. As to quaternary structure, acetyl-CoA carboxylase is a heterohexamer composed of biotin carboxyl carrier protein, biotin carboxylase and two subunits each of ACCase subunit alpha and ACCase plastid-coded subunit beta (accD).

It is found in the plastid. It localises to the chloroplast inner membrane. It carries out the reaction N(6)-carboxybiotinyl-L-lysyl-[protein] + acetyl-CoA = N(6)-biotinyl-L-lysyl-[protein] + malonyl-CoA. Its pathway is lipid metabolism; malonyl-CoA biosynthesis; malonyl-CoA from acetyl-CoA: step 1/1. Its activity is regulated as follows. Activated by reductants such as dithiothreitol (DTT), and by thioredoxin in vivo, following exposure to light. In terms of biological role, component of the acetyl coenzyme A carboxylase (ACC) complex. First, biotin carboxylase catalyzes the carboxylation of biotin on its carrier protein (BCCP) and then the CO(2) group is transferred by the carboxyltransferase to acetyl-CoA to form malonyl-CoA. This chain is Acetyl-coenzyme A carboxylase carboxyl transferase subunit alpha, chloroplastic (ACCA), found in Pisum sativum (Garden pea).